The primary structure comprises 511 residues: Bifunctional purine biosynthesis protein PurH (511 aa).

The 145-residue stretch at 1 to 145 folds into the MGS-like domain; sequence MKKRALVSVS…KNHKFVSVIV (145 aa).

Belongs to the PurH family.

The enzyme catalyses (6R)-10-formyltetrahydrofolate + 5-amino-1-(5-phospho-beta-D-ribosyl)imidazole-4-carboxamide = 5-formamido-1-(5-phospho-D-ribosyl)imidazole-4-carboxamide + (6S)-5,6,7,8-tetrahydrofolate. It catalyses the reaction IMP + H2O = 5-formamido-1-(5-phospho-D-ribosyl)imidazole-4-carboxamide. Its pathway is purine metabolism; IMP biosynthesis via de novo pathway; 5-formamido-1-(5-phospho-D-ribosyl)imidazole-4-carboxamide from 5-amino-1-(5-phospho-D-ribosyl)imidazole-4-carboxamide (10-formyl THF route): step 1/1. It functions in the pathway purine metabolism; IMP biosynthesis via de novo pathway; IMP from 5-formamido-1-(5-phospho-D-ribosyl)imidazole-4-carboxamide: step 1/1. This Bacillus cereus (strain B4264) protein is Bifunctional purine biosynthesis protein PurH.